A 1488-amino-acid chain; its full sequence is Putative E3 ubiquitin-protein ligase LIN (1488 aa).

Disordered regions lie at residues 297–330, 351–414, and 432–500; these read GFSMTTRRSNDGLNETTRENIASNSNHSKGEQSS, YDAS…PLRR, and IVSD…SSSS. Positions 366–380 are enriched in basic and acidic residues; that stretch reads EPKKNIKDEDVEPKV. The segment covering 382 to 411 has biased composition (polar residues); that stretch reads RSNQKNQMNSPNISPMESPRRASNYSSTNP. Positions 432 to 444 are enriched in low complexity; that stretch reads IVSDHSLSSSPDT. The segment covering 468–486 has biased composition (polar residues); the sequence is SQTPSMNQDNENSLVLNDS. The U-box domain occupies 512–587; sequence KPPKDFVCPI…VSWKEQNPEL (76 aa). WD repeat units lie at residues 1207 to 1244, 1249 to 1290, 1412 to 1451, and 1456 to 1488; these read SSNGEVLSLHYLNGQVLSGHADGTIKVWDARKRIPRVI, EHKK…DVYD, SLSTGLDVHRVAINSDFIFAGTKFGTIEVWLKDKFTRVAS, and GGNTKITSLASDADGMMLFVGSSDGKIQVWALD.

As to expression, expressed in roots and nodules.

It catalyses the reaction S-ubiquitinyl-[E2 ubiquitin-conjugating enzyme]-L-cysteine + [acceptor protein]-L-lysine = [E2 ubiquitin-conjugating enzyme]-L-cysteine + N(6)-ubiquitinyl-[acceptor protein]-L-lysine.. The protein operates within protein modification; protein ubiquitination. In terms of biological role, putative E3 ubiquitin ligase involved in the rhizobial infection process. Plays an important role in the early steps of bacterial symbiont thread formation in roots, and in growth, differentiation and maintenance of nodules. The polypeptide is Putative E3 ubiquitin-protein ligase LIN (Medicago truncatula (Barrel medic)).